Consider the following 153-residue polypeptide: Regulatory protein RecX (153 aa).

Belongs to the RecX family.

It localises to the cytoplasm. In terms of biological role, modulates RecA activity. The protein is Regulatory protein RecX of Neisseria meningitidis serogroup C / serotype 2a (strain ATCC 700532 / DSM 15464 / FAM18).